Consider the following 453-residue polypeptide: Serine/threonine-protein phosphatase 2A 55 kDa regulatory subunit B delta isoform (453 aa).

4 WD repeats span residues 32 to 71, 97 to 138, 181 to 219, and 230 to 270; these read AEAD…KSRP, EIEE…KRAE, AHTY…RSFN, and ELTE…LCDR. Phosphoserine is present on S285. WD repeat units follow at residues 289–327, 344–385, and 420–452; these read EIIS…RPVE, ENDC…DVTL, and DFNK…QDKI. Y305 carries the phosphotyrosine modification. At T308 the chain carries Phosphothreonine.

Belongs to the phosphatase 2A regulatory subunit B family. As to quaternary structure, PP2A consists of a common heterodimeric core enzyme, composed of a 36 kDa catalytic subunit (subunit C) and a 65 kDa constant regulatory subunit (PR65 or subunit A), that associates with a variety of regulatory subunits. Proteins that associate with the core dimer include three families of regulatory subunits B (the R2/B/PR55/B55, R3/B''/PR72/PR130/PR59 and R5/B'/B56 families), the 48 kDa variable regulatory subunit, viral proteins, and cell signaling molecules. Interacts with ENSA (when phosphorylated at 'Ser-67') and ARPP19 (when phosphorylated at 'Ser-62'), leading to inhibit PP2A activity. Interacts with IER5.

The protein localises to the cytoplasm. In terms of biological role, substrate-recognition subunit of protein phosphatase 2A (PP2A) that plays a key role in cell cycle by controlling mitosis entry and exit. Involved in chromosome clustering during late mitosis by mediating dephosphorylation of MKI67. The activity of PP2A complexes containing PPP2R2D (PR55-delta) fluctuate during the cell cycle: the activity is high in interphase and low in mitosis. The polypeptide is Serine/threonine-protein phosphatase 2A 55 kDa regulatory subunit B delta isoform (PPP2R2D) (Homo sapiens (Human)).